The sequence spans 177 residues: Transmembrane protein 196 (177 aa).

A run of 4 helical transmembrane segments spans residues 11–31 (LLVL…VGAV), 47–67 (SSPV…IFCA), 73–93 (LIMI…ILNI), and 106–126 (LYSL…GCTI). Positions 152 to 162 (HSHEMTEKDTE) are enriched in basic and acidic residues. The disordered stretch occupies residues 152–177 (HSHEMTEKDTENITNGGGPLALNGRV).

The protein localises to the cytoplasm. It localises to the membrane. This is Transmembrane protein 196 (tmem196) from Xenopus tropicalis (Western clawed frog).